The chain runs to 159 residues: Ribosomal RNA large subunit methyltransferase H (159 aa).

S-adenosyl-L-methionine-binding positions include leucine 76, glycine 108, and 127–132 (FGLLTF).

The protein belongs to the RNA methyltransferase RlmH family. In terms of assembly, homodimer.

It is found in the cytoplasm. It carries out the reaction pseudouridine(1915) in 23S rRNA + S-adenosyl-L-methionine = N(3)-methylpseudouridine(1915) in 23S rRNA + S-adenosyl-L-homocysteine + H(+). Specifically methylates the pseudouridine at position 1915 (m3Psi1915) in 23S rRNA. This is Ribosomal RNA large subunit methyltransferase H from Streptococcus thermophilus (strain CNRZ 1066).